Consider the following 82-residue polypeptide: Progonadoliberin-3 (82 aa).

Residues 1–23 (MDLSNRTVVQVVVLALVAQVTLS) form the signal peptide. At Gln-24 the chain carries Pyrrolidone carboxylic acid. At Gly-33 the chain carries Glycine amide.

The protein belongs to the GnRH family.

It is found in the secreted. Stimulates the secretion of gonadotropins. In Salmo trutta (Brown trout), this protein is Progonadoliberin-3 (gnrh3).